The sequence spans 329 residues: L-arabinose-binding periplasmic protein (329 aa).

The first 23 residues, 1 to 23 (MHKFTKALAAIGLAAVMSQSAMA), serve as a signal peptide directing secretion.

It belongs to the bacterial solute-binding protein 2 family.

It localises to the periplasm. Functionally, involved in the high-affinity L-arabinose membrane transport system. Binds with high affinity to arabinose, but can also bind D-galactose (approximately 2-fold reduction) and D-fucose (approximately 40-fold reduction). This chain is L-arabinose-binding periplasmic protein (araF), found in Escherichia coli (strain K12).